Consider the following 729-residue polypeptide: 1,4-alpha-glucan branching enzyme GlgB (729 aa).

Aspartate 408 (nucleophile) is an active-site residue. Catalysis depends on glutamate 461, which acts as the Proton donor.

The protein belongs to the glycosyl hydrolase 13 family. GlgB subfamily. In terms of assembly, monomer.

The enzyme catalyses Transfers a segment of a (1-&gt;4)-alpha-D-glucan chain to a primary hydroxy group in a similar glucan chain.. The protein operates within glycan biosynthesis; glycogen biosynthesis. In terms of biological role, catalyzes the formation of the alpha-1,6-glucosidic linkages in glycogen by scission of a 1,4-alpha-linked oligosaccharide from growing alpha-1,4-glucan chains and the subsequent attachment of the oligosaccharide to the alpha-1,6 position. This chain is 1,4-alpha-glucan branching enzyme GlgB, found in Vibrio cholerae serotype O1 (strain ATCC 39315 / El Tor Inaba N16961).